We begin with the raw amino-acid sequence, 254 residues long: Triosephosphate isomerase (254 aa).

Substrate is bound at residue 12–14 (NWK). The active-site Electrophile is His-99. Glu-169 (proton acceptor) is an active-site residue. Residues Gly-175, Ser-214, and 235–236 (GG) contribute to the substrate site.

It belongs to the triosephosphate isomerase family. Homodimer.

It localises to the cytoplasm. The catalysed reaction is D-glyceraldehyde 3-phosphate = dihydroxyacetone phosphate. Its pathway is carbohydrate biosynthesis; gluconeogenesis. The protein operates within carbohydrate degradation; glycolysis; D-glyceraldehyde 3-phosphate from glycerone phosphate: step 1/1. Functionally, involved in the gluconeogenesis. Catalyzes stereospecifically the conversion of dihydroxyacetone phosphate (DHAP) to D-glyceraldehyde-3-phosphate (G3P). The protein is Triosephosphate isomerase of Bartonella bacilliformis (strain ATCC 35685 / KC583 / Herrer 020/F12,63).